We begin with the raw amino-acid sequence, 75 residues long: uncharacterized protein (75 aa).

This is an uncharacterized protein from Vaccinia virus (strain Copenhagen) (VACV).